An 84-amino-acid polypeptide reads, in one-letter code: Sec-independent protein translocase protein TatA (84 aa).

Residues 1-21 form a helical membrane-spanning segment; that stretch reads MGGISIWQLLIVAVIVVLLFG. Composition is skewed to basic and acidic residues over residues 42–55 and 64–84; these read AMSD…KTSQ and IADK…KEQV. The interval 42 to 84 is disordered; that stretch reads AMSDDDAKQDKTSQDADFTAKSIADKQGEAKKEDAKSQDKEQV.

Belongs to the TatA/E family. The Tat system comprises two distinct complexes: a TatABC complex, containing multiple copies of TatA, TatB and TatC subunits, and a separate TatA complex, containing only TatA subunits. Substrates initially bind to the TatABC complex, which probably triggers association of the separate TatA complex to form the active translocon.

It localises to the cell inner membrane. In terms of biological role, part of the twin-arginine translocation (Tat) system that transports large folded proteins containing a characteristic twin-arginine motif in their signal peptide across membranes. TatA could form the protein-conducting channel of the Tat system. This is Sec-independent protein translocase protein TatA from Salmonella typhi.